Consider the following 335-residue polypeptide: Probable cytosolic iron-sulfur protein assembly protein Ciao1 (335 aa).

WD repeat units follow at residues 12–51, 57–96, 101–140, 146–185, 192–231, 250–289, and 301–335; these read GHKGRIWGVAWHPKGNVFASCGEDKAIRVWSLSGNTWSTK, GHKRTIREIRWSPCGQYLASASFDATTAIWSKSSGEFECN, GHENEVKSVSWSRSGGLLATCSRDKSVWIWEVAGDDEFEC, AHTQDVKRVVWHPTKDILASASYDNTIKMFAESQLDSDWD, SHTSTVWSIDFDAEGDRLVSCSDDKTLKIWRAYHPGNDAG, QHSRAIYDVSWCKLTGLIATGCGDDGIRIFKETSDSKRDE, and AHEQDVNAVEWNPAVAGQLISCSDDGTIKIWKVDD.

It belongs to the WD repeat CIA1 family.

Its function is as follows. Essential component of the cytosolic iron-sulfur (Fe/S) protein assembly machinery. Required for the maturation of extramitochondrial Fe/S proteins. This chain is Probable cytosolic iron-sulfur protein assembly protein Ciao1, found in Drosophila pseudoobscura pseudoobscura (Fruit fly).